Here is a 472-residue protein sequence, read N- to C-terminus: Proline--tRNA ligase (472 aa).

This sequence belongs to the class-II aminoacyl-tRNA synthetase family. ProS type 3 subfamily. Homodimer.

Its subcellular location is the cytoplasm. The enzyme catalyses tRNA(Pro) + L-proline + ATP = L-prolyl-tRNA(Pro) + AMP + diphosphate. Its function is as follows. Catalyzes the attachment of proline to tRNA(Pro) in a two-step reaction: proline is first activated by ATP to form Pro-AMP and then transferred to the acceptor end of tRNA(Pro). This is Proline--tRNA ligase from Ureaplasma parvum serovar 3 (strain ATCC 27815 / 27 / NCTC 11736).